Consider the following 428-residue polypeptide: ATP-dependent RNA helicase RhlB (428 aa).

The Q motif signature appears at Q9–A37. Residues L40–V219 form the Helicase ATP-binding domain. Residue A53–T60 participates in ATP binding. The DEAD box motif lies at D165–D168. Positions R245–L390 constitute a Helicase C-terminal domain. A disordered region spans residues P394–G428.

Belongs to the DEAD box helicase family. RhlB subfamily. As to quaternary structure, component of the RNA degradosome, which is a multiprotein complex involved in RNA processing and mRNA degradation.

The protein resides in the cytoplasm. It carries out the reaction ATP + H2O = ADP + phosphate + H(+). In terms of biological role, DEAD-box RNA helicase involved in RNA degradation. Has RNA-dependent ATPase activity and unwinds double-stranded RNA. This is ATP-dependent RNA helicase RhlB from Yersinia pseudotuberculosis serotype O:1b (strain IP 31758).